The primary structure comprises 303 residues: Ornithine carbamoyltransferase (303 aa).

Carbamoyl phosphate-binding positions include 52 to 55, Gln79, Arg103, and 130 to 133; these read STRT and HPCQ. L-ornithine is bound by residues Asn161, Asp222, and 226–227; that span reads SM. Residues 262–263 and Arg290 each bind carbamoyl phosphate; that span reads CL.

Belongs to the aspartate/ornithine carbamoyltransferase superfamily. OTCase family.

The protein localises to the cytoplasm. It catalyses the reaction carbamoyl phosphate + L-ornithine = L-citrulline + phosphate + H(+). Its pathway is amino-acid biosynthesis; L-arginine biosynthesis; L-arginine from L-ornithine and carbamoyl phosphate: step 1/3. Functionally, reversibly catalyzes the transfer of the carbamoyl group from carbamoyl phosphate (CP) to the N(epsilon) atom of ornithine (ORN) to produce L-citrulline. The chain is Ornithine carbamoyltransferase from Geobacter sulfurreducens (strain ATCC 51573 / DSM 12127 / PCA).